The sequence spans 556 residues: PPE family protein PPE2 (556 aa).

Residues 8–164 form a PPE region; it reads ASPPEVHSAL…ASYQAVSTAA (157 aa). The segment at 201–256 is SH3-like; sequence QKIGYTDFYNNVIQPFINWLTNLPFLQAMFSGFDPWLPSLGNPLTFLSPANIAFAL. Residues 319-340 form a leucine zipper motif region; it reads LEQTLALLPAALPLLAAPLAPL. Disordered stretches follow at residues 385–418 and 443–556; these read TPTPAPAPAPTAVTAPTPPPGPPPPPVTAPPPVT and GTGV…TRVE. The span at 400–417 shows a compositional bias: pro residues; that stretch reads PTPPPGPPPPPVTAPPPV. Over residues 456-471 the composition is skewed to low complexity; sequence AEAPAAAAAPEEQVQP. The span at 472 to 481 shows a compositional bias: basic residues; it reads QRRRRPKIKQ. Positions 473-481 match the Nuclear localization signal motif; the sequence is RRRRPKIKQ.

The protein belongs to the mycobacterial PPE family.

It localises to the secreted. The protein resides in the host cytoplasm. Its subcellular location is the host nucleus. Its function is as follows. Inhibits nitric oxide (NO) production in activated macrophages. Acts by inhibiting expression of the host inducible nitric oxide synthase (iNOS). PPE2 is translocated into the host macrophage nucleus, where it interacts with a GATA-binding site overlapping with the TATA box of NOS2 (iNOS) promoter, and strongly inhibits NOS2 gene transcription. Reduction in NO production in turn facilitates intracellular survival of the bacilli inside the macrophage. In addition, disrupts the assembly of NADPH oxidase complex, which inhibits NADPH oxidase-mediated reactive oxygen species (ROS) generation in macrophages and favors M.tuberculosis survival. Acts by interacting with NCF2, the cytosolic subunit of NADPH oxidase, and preventing translocation of NCF2 and NCF1 to the membrane, which causes a reduction of the functional assembly of NADPH oxidase complex and a decrease in NADPH oxidase activity. In Mycobacterium tuberculosis (strain ATCC 25618 / H37Rv), this protein is PPE family protein PPE2 (PPE2).